The following is a 371-amino-acid chain: uncharacterized protein (371 aa).

The interval Lys339–His371 is disordered.

This is an uncharacterized protein from Escherichia coli (strain K12).